Here is a 274-residue protein sequence, read N- to C-terminus: Large ribosomal subunit protein uL2 (274 aa).

A disordered region spans residues 223-274 (VVMNPVDHPHGGGEGRTSGGRHPVSPWGVPTKGFKTRKNKRTDKYIVRRRTK). Positions 256 to 274 (FKTRKNKRTDKYIVRRRTK) are enriched in basic residues.

It belongs to the universal ribosomal protein uL2 family. Part of the 50S ribosomal subunit. Forms a bridge to the 30S subunit in the 70S ribosome.

One of the primary rRNA binding proteins. Required for association of the 30S and 50S subunits to form the 70S ribosome, for tRNA binding and peptide bond formation. It has been suggested to have peptidyltransferase activity; this is somewhat controversial. Makes several contacts with the 16S rRNA in the 70S ribosome. In Vibrio atlanticus (strain LGP32) (Vibrio splendidus (strain Mel32)), this protein is Large ribosomal subunit protein uL2.